A 626-amino-acid polypeptide reads, in one-letter code: SHC-transforming protein 4 (626 aa).

Positions 1–185 (MRERSQDSQA…KQDGPPLQHL (185 aa)) are CH2. 2 disordered regions span residues 38-76 (ITSL…TVSS) and 119-182 (LQEN…GPPL). Over residues 120 to 139 (QENQDQTPSRPASPESNLNR) the composition is skewed to polar residues. The region spanning 186–369 (LGNGLNYCVR…LVDGAPEDRD (184 aa)) is the PID domain. The CH1 stretch occupies residues 370 to 521 (HDYYNSIPGK…HIRQQLWDEE (152 aa)). Tyr-422 carries the post-translational modification Phosphotyrosine. One can recognise an SH2 domain in the interval 522–613 (CFHGKLSRGA…GSEVRLKQPI (92 aa)).

Interacts (via PID domain) with phosphorylated MUSK (via NPXY motif); undergoes tyrosine phosphorylation downstream of activated MUSK. Interacts with GRB2; the interaction is dependent of Tyr-422 phosphorylation and increased by EGF. Post-translationally, phosphorylated; the phosphorylation is enhanced by EGF. Phosphorylation at Tyr-422 is required for the interaction with GRB2. In terms of tissue distribution, expressed in both brain and skeletal muscle; widely expressed in brain namely olfactory bulb, cortex, hippocampus, striatum, thalamus, and brain stem (at protein level). Only expressed in melanomas. Weakly expressed in normal melanocytes and benign nevi. Highly expressed at the transition from radial growth phase to vertical growth phase and metastatic melanomas, when tumor cells acquire migratory competence and invasive potential.

The protein resides in the postsynaptic cell membrane. Functionally, activates both Ras-dependent and Ras-independent migratory pathways in melanomas. Contributes to the early phases of agrin-induced tyrosine phosphorylation of CHRNB1. This is SHC-transforming protein 4 (Shc4) from Mus musculus (Mouse).